Reading from the N-terminus, the 526-residue chain is Glucose-6-phosphate 1-dehydrogenase (526 aa).

NADP(+) is bound by residues 50-57, Arg84, and Lys184; that span reads GASGDLAK. Residues Lys184, 214-218, Glu252, and Asp271 contribute to the D-glucose 6-phosphate site; that span reads HYLGK. His276 (proton acceptor) is an active-site residue. Arg370 contributes to the NADP(+) binding site. Residues Lys373 and Arg378 each contribute to the D-glucose 6-phosphate site. Lys379, Arg383, and Arg406 together coordinate NADP(+). Gln408 contacts D-glucose 6-phosphate. Residues 414–416, 434–436, Arg500, Tyr516, and Trp522 contribute to the NADP(+) site; these read YFK and DLT.

Belongs to the glucose-6-phosphate dehydrogenase family.

It localises to the cytoplasm. The protein localises to the cytosol. It carries out the reaction D-glucose 6-phosphate + NADP(+) = 6-phospho-D-glucono-1,5-lactone + NADPH + H(+). It functions in the pathway carbohydrate degradation; pentose phosphate pathway; D-ribulose 5-phosphate from D-glucose 6-phosphate (oxidative stage): step 1/3. Functionally, cytosolic glucose-6-phosphate dehydrogenase that catalyzes the first and rate-limiting step of the oxidative branch within the pentose phosphate pathway/shunt, an alternative route to glycolysis for the dissimilation of carbohydrates and a major source of reducing power and metabolic intermediates for fatty acid and nucleic acid biosynthetic processes. In Ceratitis capitata (Mediterranean fruit fly), this protein is Glucose-6-phosphate 1-dehydrogenase (ZW).